A 397-amino-acid chain; its full sequence is uncharacterized protein (397 aa).

4 helical membrane passes run 62–79, 92–109, 135–154, and 167–189; these read VLLFGILIFSIFVALIAI, WYGLLAFGVLTSLELVVT, VVFLPLICVYSLSILYSTLS, and AFLKTMLFTLLICSFILNFFPGI.

Its subcellular location is the cell membrane. This is an uncharacterized protein from Archaeoglobus fulgidus (strain ATCC 49558 / DSM 4304 / JCM 9628 / NBRC 100126 / VC-16).